The following is a 102-amino-acid chain: MEIKQIAVAGSLESSDMMITISPNDGQGIVLELDSNVEKQFGNHIRALIKTTLARLGVESATIEAVDKGALDCTIQARTIAAVHRAAGVEHYNWKEIDSWNA.

S14 carries the post-translational modification O-(phosphoribosyl dephospho-coenzyme A)serine.

Belongs to the CitD family. As to quaternary structure, oligomer with a subunit composition of (alpha,beta,gamma)6.

It is found in the cytoplasm. Its function is as follows. Covalent carrier of the coenzyme of citrate lyase. This is Citrate lyase acyl carrier protein from Streptococcus equi subsp. zooepidemicus (strain MGCS10565).